The sequence spans 108 residues: Trp operon repressor homolog (108 aa).

A DNA-binding region spans residues 59-82 (QRQISQLLGVGVATITRGSNELKS).

This sequence belongs to the TrpR family. In terms of assembly, homodimer.

It is found in the cytoplasm. Its function is as follows. This protein is an aporepressor. When complexed with L-tryptophan it binds the operator region of the trp operon and prevents the initiation of transcription. The protein is Trp operon repressor homolog of Aliivibrio fischeri (strain MJ11) (Vibrio fischeri).